Here is a 197-residue protein sequence, read N- to C-terminus: Ribonuclease HII (197 aa).

The RNase H type-2 domain maps to 9 to 197 (ELIAGVDEVG…APVKKALEQF (189 aa)). Positions 15, 16, and 107 each coordinate a divalent metal cation.

Belongs to the RNase HII family. Requires Mn(2+) as cofactor. It depends on Mg(2+) as a cofactor.

It localises to the cytoplasm. The enzyme catalyses Endonucleolytic cleavage to 5'-phosphomonoester.. In terms of biological role, endonuclease that specifically degrades the RNA of RNA-DNA hybrids. This chain is Ribonuclease HII, found in Haemophilus influenzae (strain 86-028NP).